A 312-amino-acid chain; its full sequence is MKSDKPFLERYFYDPTLLQKGLIFALYPFSLIYQGIATLKRKTAKKHDFKIPIISIGNLIAGGSGKTPFILEIAPRYQEVAVVSRGYQRDSKGLVVVSVKGNILVSQKTAGDEAYLLALNLKQASVIVSEKRELGVLKALELGAKIVFLDDGFRFNFNQFNLLLKPKVPPYYPFCLPSGLYRESIKSYEEAHLVVTEDKDYQRITSISRPTKRMLLVTAIANPSRLDAFLPKEVVKKLYFKDHAPFNLELLEKEFYQNNATSLLVTSKDLVKLQDCNLPLSVLNLKLEICPKVLEEIDHYILSYPYNTKERL.

60–67 provides a ligand contact to ATP; it reads IAGGSGKT.

This sequence belongs to the LpxK family.

The enzyme catalyses a lipid A disaccharide + ATP = a lipid IVA + ADP + H(+). It functions in the pathway glycolipid biosynthesis; lipid IV(A) biosynthesis; lipid IV(A) from (3R)-3-hydroxytetradecanoyl-[acyl-carrier-protein] and UDP-N-acetyl-alpha-D-glucosamine: step 6/6. Its function is as follows. Transfers the gamma-phosphate of ATP to the 4'-position of a tetraacyldisaccharide 1-phosphate intermediate (termed DS-1-P) to form tetraacyldisaccharide 1,4'-bis-phosphate (lipid IVA). The chain is Tetraacyldisaccharide 4'-kinase from Helicobacter pylori (strain ATCC 700392 / 26695) (Campylobacter pylori).